The following is a 624-amino-acid chain: MLSRYNRVIEINGGNADISLPIVKFPPFKLRAQLIEKDPVVWLHLIETYVTYFEYLMQGANVELLDESTLDHLRLFLRTYLHEIADEEGKLLSLGINHDVSEQLYLLKGWIFSLIKKCGLLHLQIFGDSLWNLIKVYVRRNPDSIRGLIDGSLKPRINTQRVQLDKSYQVQQHLKQLIESGKFKRIDLRCVEDLLSAKSMQPNKFAENFFTANWIEILEALWAKGQGRGHKEARELIIISLFSVSADRLLKITKELGISNFETLALYPLLGTMLINEGVHKRLPDLKSKLLFLNLGGLSMDEGDHMSYPTSSGTEVNEEQLSALMELFPQFSKYQLSQTLLAYDNNIELVTNKIFEDPTIIEAFSREPAEEEVEPVSDGDNASFTEELSILDRGDSSKNKELDKKIISEGVPDELRNKTLTRALKLLYEADEDERDDTYDEADVNRSDPSKRIGLQEDEESYDTKDDSNEVRQDHNYHIVEAYLWNLLKEDPKLFERSKRGTKVRKTMKEMTSWSDEKIEGWCRMLERSPTRARLLEKKFMFKGNSKTGKTSYVHNRDSQNDGNVVKEQAKQKKSENIKKHEPQSTEQKKRQHAKNEKRKGARANHNRKKGHDKKLARAGNNAI.

The 44-residue stretch at valine 316–threonine 359 folds into the CUE domain. Disordered regions lie at residues arginine 366–isoleucine 390, arginine 435–asparagine 469, and serine 546–isoleucine 624. The residue at position 377 (serine 377) is a Phosphoserine. Basic and acidic residues-rich tracts occupy residues aspartate 443 to leucine 455 and glutamate 568 to lysine 589. Positions lysine 590–alanine 617 are enriched in basic residues.

Component of the RQT (ribosome quality control trigger) complex, composed of SLH1, CUE3, and RQT4. Interacts with ubiquitin; the interaction is direct. Interacts with SLH1. Interacts with RQT4. Interacts with HEL2. Associates with translating ribosomes.

Its subcellular location is the cytoplasm. Its function is as follows. Involved in activation of the ribosome quality control (RQC) pathway, a pathway that degrades nascent peptide chains during problematic translation. Specifically recognizes and binds RPS20/uS10 ubiquitinated by HEL2, promoting recruitment of the RQT (ribosome quality control trigger) complex on stalled ribosomes, followed by disassembly of stalled ribosomes. The polypeptide is RQC trigger complex subunit CUE3 (CUE3) (Saccharomyces cerevisiae (strain ATCC 204508 / S288c) (Baker's yeast)).